The following is a 200-amino-acid chain: Probable nicotinate-nucleotide adenylyltransferase (200 aa).

It belongs to the NadD family.

The catalysed reaction is nicotinate beta-D-ribonucleotide + ATP + H(+) = deamido-NAD(+) + diphosphate. It participates in cofactor biosynthesis; NAD(+) biosynthesis; deamido-NAD(+) from nicotinate D-ribonucleotide: step 1/1. In terms of biological role, catalyzes the reversible adenylation of nicotinate mononucleotide (NaMN) to nicotinic acid adenine dinucleotide (NaAD). The polypeptide is Probable nicotinate-nucleotide adenylyltransferase (Leifsonia xyli subsp. xyli (strain CTCB07)).